A 117-amino-acid chain; its full sequence is Replication initiation control protein YabA (117 aa).

Positions 45-81 are disordered; the sequence is NQHLRERLDQSDRDKSSETENDSAQKPGHSDIGEGHD. 2 stretches are compositionally biased toward basic and acidic residues: residues 46–62 and 72–81; these read QHLRERLDQSDRDKSSE and GHSDIGEGHD. Residues histidine 92, cysteine 94, cysteine 107, and cysteine 110 each coordinate Zn(2+).

Belongs to the YabA family. In terms of assembly, homotetramer. Interacts with both DnaA and DnaN, acting as a bridge between these two proteins. The cofactor is Zn(2+).

Its subcellular location is the cytoplasm. It is found in the nucleoid. Functionally, involved in control of chromosome replication initiation. Inhibits the cooperative binding of DnaA to the oriC region, thus negatively regulating initiation of chromosome replication. Inhibits the ability of DnaA-ATP to form a helix on DNA; does not disassemble preformed DnaA-DNA helices. Decreases the residence time of DnaA on the chromosome at its binding sites (oriC, replication forks and promoter-binding sites). Tethers DnaA to the replication machinery via the DNA polymerase beta sliding clamp subunit (dnaN). Associates with oriC and other DnaA targets on the chromosome in a DnaA-dependent manner. In Bacillus pumilus (strain SAFR-032), this protein is Replication initiation control protein YabA.